The following is a 274-amino-acid chain: GATA transcription factor 1 (274 aa).

Disordered regions lie at residues 1–39 and 102–132; these read MEME…KTGL and SPVS…TAVA. The Nuclear localization signal signature appears at 152–159; the sequence is KARSKRRR. The GATA-type zinc finger occupies 190–244; sequence LIMGRKCQHCGAEKTPQWRAGPAGPKTLCNACGVRYKSGRLVPEYRPANSPTFTA.

This sequence belongs to the type IV zinc-finger family. Class A subfamily. Mostly expressed in roots. Also expressed in stems, flowers and leaves.

It localises to the nucleus. Transcriptional activator that specifically binds 5'-GATA-3' or 5'-GAT-3' motifs within gene promoters. May be involved in the regulation of some light-responsive genes. The sequence is that of GATA transcription factor 1 (GATA1) from Arabidopsis thaliana (Mouse-ear cress).